The sequence spans 524 residues: MSQLSMSWMGLGHTAASPWLLLLLAGASCLLAYILTPIYGVFENSLRLRCFPQPPKRNWILGHLGLIQSSEEGLLYIQSLVRTFRDACCWWVGPLHPVIRIFHPAFIKPVVLAPALVAPKDTVFYRFLKPWLGDGLLMSTGDKWSRHRRMLTPAFHFNILKPYVKVFNDSTNIMHAKWQRLASKGSAYLNMFEHISLMTLDSLQKCVFSFDSNCQEKPSEYITAILELSTLVARRHQRLLLHVDLFYYLTHDGMRFRKACRLVHDFTDAVIRERRRTLLDQGGVDVLKAKAKAKTLDFIDVLLLSKDEHGKALSDEDIRAEADTFMFGGHDTTASGLSWILYNLARHPEYQERCRQEVRELLRDREPEEIEWDDLAQLPFLTMCIKESLRLHPPVTAISRCCTQDIVLPDGRVIPKGVISRISIFGTHHNPAVWPDPEVYDPFRFDADNVKGRSPLAFIPFSAGPRNCIGQTFAMSEMKVALALTLLRFRVLPDDKEPRRKPELILRAEGGLWLKVEPLSAGAQ.

Residues 19 to 39 (WLLLLLAGASCLLAYILTPIY) form a helical membrane-spanning segment. Position 468 (Cys-468) interacts with heme.

It belongs to the cytochrome P450 family. The cofactor is heme. In terms of tissue distribution, highest level in polymorphonuclear leukocytes and dendritic cells. Detectable in lymph nodes, spleen, bone marrow and peripheral blood. Highly expressed in ovary. Very low level in liver, kidney, and smooth muscle. Expressed in neutrophils (at protein level).

Its subcellular location is the endoplasmic reticulum membrane. It is found in the microsome membrane. The enzyme catalyses leukotriene B4 + reduced [NADPH--hemoprotein reductase] + O2 = 18-hydroxy-leukotriene B4 + oxidized [NADPH--hemoprotein reductase] + H2O + H(+). The catalysed reaction is leukotriene B4 + reduced [NADPH--hemoprotein reductase] + O2 = 19-hydroxy-leukotriene B4 + oxidized [NADPH--hemoprotein reductase] + H2O + H(+). It participates in lipid metabolism; leukotriene B4 degradation. A cytochrome P450 monooxygenase involved in the metabolism of the pro-inflammatory lipid mediator leukotriene B4 (LTB4). Hydroxylates at the omega-1 and omega-2 positions LTB4. This oxidation step leads to LTB4 inactivation, which is postulated to be a crucial part of the resolution of inflammation. Mechanistically, uses molecular oxygen inserting one oxygen atom into a substrate, and reducing the second into a water molecule, with two electrons provided by NADPH via cytochrome P450 reductase (CPR; NADPH-ferrihemoprotein reductase). This Mus musculus (Mouse) protein is Cytochrome P450 4F3.